Here is a 410-residue protein sequence, read N- to C-terminus: Kelch domain-containing protein 10 (410 aa).

Residues 1–40 are disordered; that stretch reads MSAAQGWDRNRRRGGGAAGGASGVSGAGAAGGGRGTGQLN. Arginine 13 is modified (omega-N-methylarginine). Over residues 15–36 the composition is skewed to gly residues; that stretch reads GGAAGGASGVSGAGAAGGGRGT. Kelch repeat units follow at residues 87 to 154, 155 to 198, 199 to 260, 261 to 319, 320 to 364, and 365 to 403; these read GPDN…DVHV, CNVK…GYIY, STDL…IHAY, NLET…LQTF, QWVK…GSLF, and KIWLVVPSLLELAWEKLLAAFPNLANLSRTQLLHLGLTQ. The interaction with CUL2 stretch occupies residues 369–410; it reads VVPSLLELAWEKLLAAFPNLANLSRTQLLHLGLTQELIERLK.

Belongs to the KLHDC10 family. Component of a CRL2 E3 ubiquitin-protein ligase complex, also named ECS (Elongin BC-CUL2/5-SOCS-box protein) complex, composed of CUL2, Elongin BC (ELOB and ELOC), RBX1 and substrate-specific adapter KLHDC10. Interacts (via the 6 Kelch repeats) with PPP5C.

It localises to the nucleus. It is found in the cytoplasm. It participates in protein modification; protein ubiquitination. Substrate-recognition component of a Cul2-RING (CRL2) E3 ubiquitin-protein ligase complex of the DesCEND (destruction via C-end degrons) pathway, which recognizes a C-degron located at the extreme C-terminus of target proteins, leading to their ubiquitination and degradation. The C-degron recognized by the DesCEND pathway is usually a motif of less than ten residues and can be present in full-length proteins, truncated proteins or proteolytically cleaved forms. The CRL2(KLHDC10) complex specifically recognizes proteins with a proline-glycine (Pro-Gly) or an alanine tail (CAT tail) at the C-terminus, leading to their ubiquitination and degradation. The CRL2(KLHDC10) complex is involved in the ribosome-associated quality control (RQC) pathway, which mediates the extraction of incompletely synthesized nascent chains from stalled ribosomes: CRL2(KLHDC10) acts downstream of NEMF and recognizes CAT tails associated with stalled nascent chains, leading to their ubiquitination and degradation. Participates in the oxidative stress-induced cell death through MAP3K5 activation. Inhibits PPP5C phosphatase activity on MAP3K5. Acts as a regulator of necroptosis. This Rattus norvegicus (Rat) protein is Kelch domain-containing protein 10.